The chain runs to 181 residues: Large ribosomal subunit protein uL5 (181 aa).

Belongs to the universal ribosomal protein uL5 family. In terms of assembly, part of the 50S ribosomal subunit; contacts the 5S rRNA and probably tRNA. Forms a bridge to the 30S subunit in the 70S ribosome.

This is one of the proteins that bind and probably mediate the attachment of the 5S RNA into the large ribosomal subunit, where it forms part of the central protuberance. In the 70S ribosome it contacts protein S13 of the 30S subunit (bridge B1b), connecting the 2 subunits; this bridge is implicated in subunit movement. May contact the P site tRNA; the 5S rRNA and some of its associated proteins might help stabilize positioning of ribosome-bound tRNAs. This chain is Large ribosomal subunit protein uL5, found in Methanococcus maripaludis (strain C5 / ATCC BAA-1333).